A 274-amino-acid polypeptide reads, in one-letter code: Malonyl-[acyl-carrier protein] O-methyltransferase (274 aa).

It belongs to the methyltransferase superfamily.

The catalysed reaction is malonyl-[ACP] + S-adenosyl-L-methionine = malonyl-[ACP] methyl ester + S-adenosyl-L-homocysteine. It functions in the pathway cofactor biosynthesis; biotin biosynthesis. Functionally, converts the free carboxyl group of a malonyl-thioester to its methyl ester by transfer of a methyl group from S-adenosyl-L-methionine (SAM). It allows to synthesize pimeloyl-ACP via the fatty acid synthetic pathway. The polypeptide is Malonyl-[acyl-carrier protein] O-methyltransferase (Priestia megaterium (strain DSM 319 / IMG 1521) (Bacillus megaterium)).